A 324-amino-acid chain; its full sequence is Elongation factor P--(R)-beta-lysine ligase (324 aa).

75–77 lines the substrate pocket; it reads SPE. ATP is bound by residues 99–101 and N108; that span reads RNE. A substrate-binding site is contributed by Y117. 243–244 contributes to the ATP binding site; that stretch reads EL. A substrate-binding site is contributed by E250. G299 is an ATP binding site.

The protein belongs to the class-II aminoacyl-tRNA synthetase family. EpmA subfamily. Homodimer.

The enzyme catalyses D-beta-lysine + L-lysyl-[protein] + ATP = N(6)-((3R)-3,6-diaminohexanoyl)-L-lysyl-[protein] + AMP + diphosphate + H(+). Functionally, with EpmB is involved in the beta-lysylation step of the post-translational modification of translation elongation factor P (EF-P). Catalyzes the ATP-dependent activation of (R)-beta-lysine produced by EpmB, forming a lysyl-adenylate, from which the beta-lysyl moiety is then transferred to the epsilon-amino group of a conserved specific lysine residue in EF-P. This is Elongation factor P--(R)-beta-lysine ligase from Vibrio cholerae serotype O1 (strain ATCC 39315 / El Tor Inaba N16961).